The following is a 57-amino-acid chain: Thiocillin GE37468 (57 aa).

Positions 1 to 42 (MGNNEEYFIDVNDLSIDVFDVVEQGGAVTALTADHGMPEVGA) are cleaved as a propeptide — removed in mature form. The segment at residues 43-44 (ST) is a cross-link (5-methyloxazole-4-carboxylic acid (Ser-Thr)). Residues 43–52 (STNCFCYICC) constitute a cross-link (pyridine-2,5-dicarboxylic acid (Ser-Cys) (with S-53)). The segment at residues 43–53 (STNCFCYICCS) is a cross-link (pyridine-2,5-dicarboxylic acid (Ser-Ser) (with C-52)). Positions 45-46 (NC) form a cross-link, thiazole-4-carboxylic acid (Asn-Cys). Positions 47–48 (FC) form a cross-link, thiazoline-4-carboxylic acid (Phe-Cys). Ile-50 is modified (5-hydroxy-3-methylproline (Ile)). The segment at residues 50–51 (IC) is a cross-link (thiazole-4-carboxylic acid (Ile-Cys)). A cross-link (thiazole-4-carboxylic acid (Cys-Cys)) is located at residues 51 to 52 (CC). Residues 53-54 (SC) constitute a cross-link (thiazole-4-carboxylic acid (Ser-Cys)). 2,3-didehydroalanine (Ser) is present on residues Ser-55 and Ser-56. Residue Asn-57 is a propeptide, removed in mature form.

Maturation of thiazole and oxazole containing antibiotics involves the enzymatic condensation of a Cys, Ser or Thr with the alpha-carbonyl of the preceding amino acid to form a thioether or ether bond, then dehydration to form a double bond with the alpha-amino nitrogen. Thiazoline or oxazoline ring are dehydrogenated to form thiazole or oxazole rings. In terms of processing, maturation of pyridinyl containing antibiotics involves the cross-linking of a Ser and a Cys-Ser pair usually separated by 7 or 8 residues along the peptide chain. The Ser residues are dehydrated to didehydroalanines, then bonded between their beta carbons. The alpha carbonyl of the Cys condenses with alpha carbon of the first Ser to form a pyridinyl ring. The ring may be multiply dehydrogenated to form a pyridine ring with loss of the amino nitrogen of the first Ser.

It is found in the secreted. In terms of biological role, has bacteriocidal activity against both aerobic and anaerobic Gram-positive bacteria. Inhibits growth of B.subtilis (MIC=0.047 ug/ml) and methicillin-resistant S.aureus (MRSA) (MIC=0.047 ug/ml). Has poor activity against Gram-negative bacteria, with the exception of B.fragilis. Inhibits bacterial protein biosynthesis by acting on elongation factor Tu (EF-Tu). Full antibiotic activity depends on the presence of the modified residue Ile-50. The protein is Thiocillin GE37468 (getA) of Streptomyces sp.